The sequence spans 688 residues: Collagen alpha-2(IX) chain (688 aa).

A signal peptide spans 1-22 (MTAVPAPRSLFVLLQVLWLALA). Residues 26 to 162 (GPPGEPGPPG…PGKPGRPGTI (137 aa)) form a triple-helical region 4 (COL4) region. The segment at 26 to 171 (GPPGEPGPPG…IQGLEGSADF (146 aa)) is disordered. 2 stretches are compositionally biased toward pro residues: residues 28–42 (PGEPGPPGPPGPPGV) and 105–126 (LPGPPGLPGPGFAGPPGPPGPV). Over residues 128–137 (LPGEIGTPGP) the composition is skewed to low complexity. Residues 138–156 (KGDPGPEGPSGPPGPPGKP) show a composition bias toward pro residues. Position 159 is a 4-hydroxyproline (proline 159). The interval 163-179 (QGLEGSADFLCPTNCPA) is nonhelical region 4 (NC4). Serine 168 is a glycosylation site (O-linked (Xyl...) (glycosaminoglycan) serine). The tract at residues 180–518 (GVKGPQGLQG…PGRQGVVGRA (339 aa)) is triple-helical region 3 (COL3). Lysine 182 carries the post-translational modification 5-hydroxylysine. O-linked (Gal...) hydroxylysine glycosylation occurs at lysine 182. Positions 183 to 517 (GPQGLQGVKG…QPGRQGVVGR (335 aa)) are disordered. Low complexity-rich tracts occupy residues 289 to 314 (PQGITGPKGITGPPGIDGKDGTPGIP) and 392 to 412 (RGPVGQPGPQGRQGPKGEQGP). Residues 435-444 (GPRGGVGDPG) are compositionally biased toward gly residues. Residues 502-517 (DRGVPGQPGRQGVVGR) are compositionally biased toward low complexity. The nonhelical region 3 (NC3) stretch occupies residues 519 to 548 (ASDQHIVDVVLKMIQEQLAEVAVSAKREAL). The triple-helical region 2 (COL2) stretch occupies residues 549-631 (GAAGMVGLPG…PGLPGRPGQA (83 aa)). Positions 553–664 (MVGLPGPPGP…GPVGLPGFCE (112 aa)) are disordered. Basic and acidic residues predominate over residues 598 to 610 (KRGEKGDRGEMGH). The tract at residues 632-633 (IN) is nonhelical region 2 (NC2). Residues 634–663 (GKDGDRGSPGAPGEAGRPGRPGPVGLPGFC) are triple-helical region 1 (COL1). A nonhelical region 1 (NC1) region spans residues 664–688 (EPAACLGASAYTSARLTEPGSIKGP).

It belongs to the fibril-associated collagens with interrupted helices (FACIT) family. In terms of assembly, heterotrimer of an alpha 1(IX), an alpha 2(IX) and an alpha 3(IX) chain. The chains are linked to each other by interchain disulfide bonds. Trimers are also cross-linked via hydroxylysines. Covalently linked to the telopeptides of type II collagen by lysine-derived cross-links. Post-translationally, prolines at the third position of the tripeptide repeating unit (G-X-Y) are hydroxylated in some or all of the chains.

It is found in the secreted. It localises to the extracellular space. The protein localises to the extracellular matrix. Functionally, structural component of hyaline cartilage and vitreous of the eye. In Mus musculus (Mouse), this protein is Collagen alpha-2(IX) chain (Col9a2).